The primary structure comprises 406 residues: Multifunctional CCA protein (406 aa).

ATP contacts are provided by glycine 8 and arginine 11. Positions 8 and 11 each coordinate CTP. Residues aspartate 21 and aspartate 23 each coordinate Mg(2+). 3 residues coordinate ATP: arginine 91, arginine 137, and arginine 140. CTP contacts are provided by arginine 91, arginine 137, and arginine 140. Positions 228 to 329 (TGIHTLMVAE…IKILNKFDVW (102 aa)) constitute an HD domain.

This sequence belongs to the tRNA nucleotidyltransferase/poly(A) polymerase family. Bacterial CCA-adding enzyme type 1 subfamily. In terms of assembly, monomer. Can also form homodimers and oligomers. Requires Mg(2+) as cofactor. Ni(2+) is required as a cofactor.

The enzyme catalyses a tRNA precursor + 2 CTP + ATP = a tRNA with a 3' CCA end + 3 diphosphate. The catalysed reaction is a tRNA with a 3' CCA end + 2 CTP + ATP = a tRNA with a 3' CCACCA end + 3 diphosphate. Its function is as follows. Catalyzes the addition and repair of the essential 3'-terminal CCA sequence in tRNAs without using a nucleic acid template. Adds these three nucleotides in the order of C, C, and A to the tRNA nucleotide-73, using CTP and ATP as substrates and producing inorganic pyrophosphate. tRNA 3'-terminal CCA addition is required both for tRNA processing and repair. Also involved in tRNA surveillance by mediating tandem CCA addition to generate a CCACCA at the 3' terminus of unstable tRNAs. While stable tRNAs receive only 3'-terminal CCA, unstable tRNAs are marked with CCACCA and rapidly degraded. The sequence is that of Multifunctional CCA protein from Vibrio parahaemolyticus serotype O3:K6 (strain RIMD 2210633).